The following is a 252-amino-acid chain: MLKDVVISRAIVESYFKDLLNNLELDVAIVGAGPSGMVAGYYLAKGGAKVAIFEKKLSIGGGIWGGGMGFNKIVVQEEAKEILDEFDIRYEEFEKGYYVADAIEVATTIASKTVKAGVKIFNMVEVEDLVVKDDRVSGIVINWTPVKMTGLHVDPLTVEAKYVIDSTGHGAQVTQFLLKRGLIEKIPGEGAMWAEMGEKLTVENTKEVFPGLYVTGMAANAVSGAPRMGPIFGGMFLSGRKAAMEILQKLGL.

NAD(+) contacts are provided by residues serine 35, 54–55 (EK), glycine 62, valine 126, and 152–154 (HVD). Positions 154 and 169 each coordinate Fe cation. An NAD(+)-binding site is contributed by methionine 217. Arginine 227 serves as a coordination point for glycine.

It belongs to the THI4 family. As to quaternary structure, homooctamer; tetramer of dimers. Requires Fe(2+) as cofactor.

The enzyme catalyses hydrogen sulfide + glycine + NAD(+) = ADP-5-ethyl-4-methylthiazole-2-carboxylate + nicotinamide + 3 H2O + H(+). The protein operates within cofactor biosynthesis; thiamine diphosphate biosynthesis. In terms of biological role, involved in the biosynthesis of the thiazole moiety of thiamine. Catalyzes the conversion of NAD and glycine to adenosine diphosphate 5-(2-hydroxyethyl)-4-methylthiazole-2-carboxylate (ADT), an adenylated thiazole intermediate, using free sulfide as a source of sulfur. In Pyrococcus furiosus (strain ATCC 43587 / DSM 3638 / JCM 8422 / Vc1), this protein is Thiamine thiazole synthase.